The following is a 337-amino-acid chain: DNA-directed RNA polymerase subunit alpha (337 aa).

The segment at 1-233 (MVREKVTVST…DLFIPFLHME (233 aa)) is alpha N-terminal domain (alpha-NTD). The tract at residues 265 to 337 (KKIALKSIFI…FVIDLAKNKF (73 aa)) is alpha C-terminal domain (alpha-CTD).

This sequence belongs to the RNA polymerase alpha chain family. In plastids the minimal PEP RNA polymerase catalytic core is composed of four subunits: alpha, beta, beta', and beta''. When a (nuclear-encoded) sigma factor is associated with the core the holoenzyme is formed, which can initiate transcription.

Its subcellular location is the plastid. The protein resides in the chloroplast. It carries out the reaction RNA(n) + a ribonucleoside 5'-triphosphate = RNA(n+1) + diphosphate. DNA-dependent RNA polymerase catalyzes the transcription of DNA into RNA using the four ribonucleoside triphosphates as substrates. The chain is DNA-directed RNA polymerase subunit alpha from Solanum lycopersicum (Tomato).